The primary structure comprises 864 residues: Seed linoleate 9S-lipoxygenase-2 (864 aa).

Residues 46 to 171 (SGINIIGSTL…LYKSPRIFFA (126 aa)) form the PLAT domain. A Lipoxygenase domain is found at 174–864 (SYLPSETPSP…FRGIPNSISI (691 aa)). Residues 230–264 (PILGGSSTHPYPRRGRTGRYPTRKDPNSEKPATET) form a disordered region. Residues 251–264 (TRKDPNSEKPATET) show a composition bias toward basic and acidic residues. The Fe cation site is built by His-524, His-529, His-716, Asn-720, and Ile-864.

This sequence belongs to the lipoxygenase family. It depends on Fe cation as a cofactor.

The protein resides in the cytoplasm. The enzyme catalyses (9Z,12Z)-octadecadienoate + O2 = (9S)-hydroperoxy-(10E,12Z)-octadecadienoate. It participates in lipid metabolism; oxylipin biosynthesis. In terms of biological role, plant lipoxygenase may be involved in a number of diverse aspects of plant physiology including growth and development, pest resistance, and senescence or responses to wounding. It catalyzes the hydroperoxidation of lipids containing a cis,cis-1,4-pentadiene structure. The sequence is that of Seed linoleate 9S-lipoxygenase-2 (LOX1.2) from Pisum sativum (Garden pea).